Here is a 284-residue protein sequence, read N- to C-terminus: Bifunctional protein FolD (284 aa).

Residues G166–S168 and I232 contribute to the NADP(+) site.

This sequence belongs to the tetrahydrofolate dehydrogenase/cyclohydrolase family. In terms of assembly, homodimer.

The enzyme catalyses (6R)-5,10-methylene-5,6,7,8-tetrahydrofolate + NADP(+) = (6R)-5,10-methenyltetrahydrofolate + NADPH. It carries out the reaction (6R)-5,10-methenyltetrahydrofolate + H2O = (6R)-10-formyltetrahydrofolate + H(+). The protein operates within one-carbon metabolism; tetrahydrofolate interconversion. In terms of biological role, catalyzes the oxidation of 5,10-methylenetetrahydrofolate to 5,10-methenyltetrahydrofolate and then the hydrolysis of 5,10-methenyltetrahydrofolate to 10-formyltetrahydrofolate. The sequence is that of Bifunctional protein FolD from Tolumonas auensis (strain DSM 9187 / NBRC 110442 / TA 4).